The primary structure comprises 190 residues: Lipid A 1-phosphatase (190 aa).

5 helical membrane passes run 22-42, 60-80, 117-137, 145-162, and 164-184; these read LLAL…PKVP, FIPT…VGLF, GNFN…AFLM, YFWL…RIYL, and MHTI…VSLF.

It belongs to the lipid A LpxE 1-phosphatase family. Does not require divalent cations. is required as a cofactor.

Its subcellular location is the cell inner membrane. It participates in bacterial outer membrane biogenesis; LPS lipid A biosynthesis. Removes the 1-phosphate group from tetra- and probably hexaacylated lipid A species, has no requirement for the Kdo moiety of lipid A. Has no 4'-phosphatase activity. Has no activity on phospholipids (phosphatidylglycerol, phosphatidylethanolamine or cardiolipin). This enzyme has to act before EptA can attach phosphoethanolamine to the 1-position of lipid A. Absence of the 1-phosphate group renders the bacteria partially resistant to host-derived cationic antimicrobial peptides (CAMP), allowing it to camouflage itself from the host innate immune response, and plays a role in the long-term colonization of the host's stomach. The polypeptide is Lipid A 1-phosphatase (Helicobacter pylori (strain ATCC 700392 / 26695) (Campylobacter pylori)).